The primary structure comprises 578 residues: Longifolene synthase (578 aa).

3 residues coordinate Mg(2+): D331, D335, and D475. The short motif at 331–335 (DDLYD) is the DDXXD motif element.

This sequence belongs to the terpene synthase family. Tpsd subfamily. Mg(2+) is required as a cofactor. It depends on Mn(2+) as a cofactor.

It catalyses the reaction (2E,6E)-farnesyl diphosphate = longifolene + diphosphate. It functions in the pathway sesquiterpene biosynthesis. The protein operates within terpene metabolism; oleoresin biosynthesis. In terms of biological role, terpene synthase (TPS) involved in the biosynthesis of sesquiterpene natural products included in conifer oleoresin secretions and volatile emissions; these compounds contribute to biotic and abiotic stress defense against herbivores and pathogens. Catalyzes the conversion of (2E,6E)-farnesyl diphosphate (FPP) to longifolene. This is Longifolene synthase from Picea engelmannii x Picea glauca (Hybrid white spruce).